A 377-amino-acid chain; its full sequence is Succinyl-diaminopimelate desuccinylase (377 aa).

His-68 is a binding site for Zn(2+). Asp-70 is an active-site residue. Asp-101 provides a ligand contact to Zn(2+). Glu-135 (proton acceptor) is an active-site residue. Glu-136, Glu-164, and His-350 together coordinate Zn(2+).

It belongs to the peptidase M20A family. DapE subfamily. As to quaternary structure, homodimer. Requires Zn(2+) as cofactor. The cofactor is Co(2+).

The enzyme catalyses N-succinyl-(2S,6S)-2,6-diaminopimelate + H2O = (2S,6S)-2,6-diaminopimelate + succinate. Its pathway is amino-acid biosynthesis; L-lysine biosynthesis via DAP pathway; LL-2,6-diaminopimelate from (S)-tetrahydrodipicolinate (succinylase route): step 3/3. Functionally, catalyzes the hydrolysis of N-succinyl-L,L-diaminopimelic acid (SDAP), forming succinate and LL-2,6-diaminopimelate (DAP), an intermediate involved in the bacterial biosynthesis of lysine and meso-diaminopimelic acid, an essential component of bacterial cell walls. In Aliivibrio salmonicida (strain LFI1238) (Vibrio salmonicida (strain LFI1238)), this protein is Succinyl-diaminopimelate desuccinylase.